A 136-amino-acid chain; its full sequence is Protein NrdI (136 aa).

It belongs to the NrdI family.

Its function is as follows. Probably involved in ribonucleotide reductase function. This chain is Protein NrdI, found in Escherichia coli (strain 55989 / EAEC).